A 163-amino-acid polypeptide reads, in one-letter code: Cyanate hydratase (163 aa).

Active-site residues include R103, E106, and S129.

Belongs to the cyanase family.

The catalysed reaction is cyanate + hydrogencarbonate + 3 H(+) = NH4(+) + 2 CO2. Catalyzes the reaction of cyanate with bicarbonate to produce ammonia and carbon dioxide. The chain is Cyanate hydratase from Ajellomyces capsulatus (strain G186AR / H82 / ATCC MYA-2454 / RMSCC 2432) (Darling's disease fungus).